Here is a 314-residue protein sequence, read N- to C-terminus: MPLEQRSQHCKPEEGLEARGEALGLVGAQAPATEEQQTASSSSTLVEVTLGEVPAADSPSPPHSPQGASSFSTTINYTLWRQSDEGSSNQEEEGPRMFPDLESEFQAAISRKMVELVHFLLLKYRAREPVTKAEMLESVLRNCQDFFPVIFSKASEYLQLVFGIEVVEVVPISHLYILVTCLGLSYDGLLGDNQVMPKTGLLIIVLAIIAIEGDCAPEEKIWEELSMLEVFEGREDSVFAHPRKLLMQDLVQENYLEYRQVPGSDPACYEFLWGPRALIETSYVKVLHHTLKIGGEPHISYPPLHERALREGEE.

Positions 1-20 are enriched in basic and acidic residues; it reads MPLEQRSQHCKPEEGLEARG. The disordered stretch occupies residues 1–69; sequence MPLEQRSQHC…SPPHSPQGAS (69 aa). The segment covering 21–44 has biased composition (low complexity); the sequence is EALGLVGAQAPATEEQQTASSSST. Ser-64 bears the Phosphoserine mark. The MAGE domain maps to 109 to 308; it reads ISRKMVELVH…ISYPPLHERA (200 aa).

As to quaternary structure, interacts with TRIM28 and UBE2H. Interacts with HDAC3. Interacts with PML (isoform PML-1, isoform PML-2, isoform PML-3, isoform PML-4 and isoform PML-5). In terms of tissue distribution, expressed in many tumors of several types, such as melanoma, head and neck squamous cell carcinoma, lung carcinoma and breast carcinoma, but not in normal tissues except for testes.

It localises to the nucleus. The protein localises to the PML body. Its function is as follows. Reduces p53/TP53 transactivation function through recruitment of HDAC3 to p53/TP53 transcription sites. Also represses p73/TP73 activity. Proposed to enhance ubiquitin ligase activity of RING-type zinc finger-containing E3 ubiquitin-protein ligases. In vitro enhances ubiquitin ligase activity of TRIM28 and stimulates p53/TP53 ubiquitination by TRIM28 potentially in presence of Ubl-conjugating enzyme UBE2H. Proposed to act through recruitment and/or stabilization of the Ubl-conjugating enzyme (E2) at the E3:substrate complex. May play a role in embryonal development and tumor transformation or aspects of tumor progression. In vitro promotes cell viability in melanoma cell lines. Antigen recognized on a melanoma by autologous cytolytic T-lymphocytes. Negatively regulates acetylation and sumoylation of PML and represses PML-induced p53/TP53 acetylation and activation. This chain is Melanoma-associated antigen 2 (MAGEA2), found in Homo sapiens (Human).